The chain runs to 339 residues: UDP-3-O-acylglucosamine N-acyltransferase (339 aa).

His-251 serves as the catalytic Proton acceptor.

This sequence belongs to the transferase hexapeptide repeat family. LpxD subfamily. In terms of assembly, homotrimer.

It carries out the reaction a UDP-3-O-[(3R)-3-hydroxyacyl]-alpha-D-glucosamine + a (3R)-hydroxyacyl-[ACP] = a UDP-2-N,3-O-bis[(3R)-3-hydroxyacyl]-alpha-D-glucosamine + holo-[ACP] + H(+). The protein operates within bacterial outer membrane biogenesis; LPS lipid A biosynthesis. Its function is as follows. Catalyzes the N-acylation of UDP-3-O-acylglucosamine using 3-hydroxyacyl-ACP as the acyl donor. Is involved in the biosynthesis of lipid A, a phosphorylated glycolipid that anchors the lipopolysaccharide to the outer membrane of the cell. The protein is UDP-3-O-acylglucosamine N-acyltransferase of Paramagnetospirillum magneticum (strain ATCC 700264 / AMB-1) (Magnetospirillum magneticum).